The following is a 465-amino-acid chain: UDP-N-acetylmuramate--L-alanine ligase (465 aa).

Residue 114 to 120 participates in ATP binding; it reads GTHGKTT.

Belongs to the MurCDEF family.

It is found in the cytoplasm. It catalyses the reaction UDP-N-acetyl-alpha-D-muramate + L-alanine + ATP = UDP-N-acetyl-alpha-D-muramoyl-L-alanine + ADP + phosphate + H(+). The protein operates within cell wall biogenesis; peptidoglycan biosynthesis. In terms of biological role, cell wall formation. The chain is UDP-N-acetylmuramate--L-alanine ligase from Chlorobium phaeobacteroides (strain BS1).